The primary structure comprises 65 residues: MTKSAELRQKDVAGLEAEIKSLQKAHFGLRMQKATQQLGNTATLKATRRDIARAKTILAEKQAAK.

The protein belongs to the universal ribosomal protein uL29 family.

The protein is Large ribosomal subunit protein uL29 of Acidovorax ebreus (strain TPSY) (Diaphorobacter sp. (strain TPSY)).